A 433-amino-acid polypeptide reads, in one-letter code: Serine hydroxymethyltransferase (433 aa).

(6S)-5,6,7,8-tetrahydrofolate-binding positions include Leu-132 and 136–138; that span reads GHL. Lys-241 is modified (N6-(pyridoxal phosphate)lysine).

This sequence belongs to the SHMT family. In terms of assembly, homodimer. The cofactor is pyridoxal 5'-phosphate.

It localises to the cytoplasm. The catalysed reaction is (6R)-5,10-methylene-5,6,7,8-tetrahydrofolate + glycine + H2O = (6S)-5,6,7,8-tetrahydrofolate + L-serine. Its pathway is one-carbon metabolism; tetrahydrofolate interconversion. The protein operates within amino-acid biosynthesis; glycine biosynthesis; glycine from L-serine: step 1/1. Its function is as follows. Catalyzes the reversible interconversion of serine and glycine with tetrahydrofolate (THF) serving as the one-carbon carrier. This reaction serves as the major source of one-carbon groups required for the biosynthesis of purines, thymidylate, methionine, and other important biomolecules. Also exhibits THF-independent aldolase activity toward beta-hydroxyamino acids, producing glycine and aldehydes, via a retro-aldol mechanism. In Rhodopseudomonas palustris (strain BisA53), this protein is Serine hydroxymethyltransferase.